The following is a 276-amino-acid chain: 4-hydroxy-tetrahydrodipicolinate reductase (276 aa).

NAD(+) is bound by residues 10–15 (GALGKM), D36, and 109–111 (GTT). Residue H165 is the Proton donor/acceptor of the active site. H166 provides a ligand contact to (S)-2,3,4,5-tetrahydrodipicolinate. K169 acts as the Proton donor in catalysis. Residue 175–176 (GT) coordinates (S)-2,3,4,5-tetrahydrodipicolinate.

This sequence belongs to the DapB family.

It is found in the cytoplasm. It catalyses the reaction (S)-2,3,4,5-tetrahydrodipicolinate + NAD(+) + H2O = (2S,4S)-4-hydroxy-2,3,4,5-tetrahydrodipicolinate + NADH + H(+). The enzyme catalyses (S)-2,3,4,5-tetrahydrodipicolinate + NADP(+) + H2O = (2S,4S)-4-hydroxy-2,3,4,5-tetrahydrodipicolinate + NADPH + H(+). It participates in amino-acid biosynthesis; L-lysine biosynthesis via DAP pathway; (S)-tetrahydrodipicolinate from L-aspartate: step 4/4. Functionally, catalyzes the conversion of 4-hydroxy-tetrahydrodipicolinate (HTPA) to tetrahydrodipicolinate. The chain is 4-hydroxy-tetrahydrodipicolinate reductase from Prochlorococcus marinus (strain SARG / CCMP1375 / SS120).